A 514-amino-acid polypeptide reads, in one-letter code: Alanine--glyoxylate aminotransferase 2, mitochondrial (514 aa).

The transit peptide at 1 to 41 directs the protein to the mitochondrion; that stretch reads MTLIWRHLLRPLCLVTPAPRILEMRPFLNLGASWTSVTKLS. Lys-71 is modified (N6-acetyllysine; alternate). Position 71 is an N6-succinyllysine; alternate (Lys-71). N6-acetyllysine is present on Lys-84. Residue Lys-262 is modified to N6-acetyllysine; alternate. At Lys-262 the chain carries N6-succinyllysine; alternate. Residue Lys-304 is modified to N6-succinyllysine. Lys-350 is subject to N6-(pyridoxal phosphate)lysine. The residue at position 420 (Lys-420) is an N6-acetyllysine; alternate. At Lys-420 the chain carries N6-succinyllysine; alternate.

It belongs to the class-III pyridoxal-phosphate-dependent aminotransferase family. Homotetramer. The cofactor is pyridoxal 5'-phosphate.

It localises to the mitochondrion. It catalyses the reaction glyoxylate + L-alanine = glycine + pyruvate. The catalysed reaction is (R)-3-amino-2-methylpropanoate + pyruvate = 2-methyl-3-oxopropanoate + L-alanine. It carries out the reaction 3-oxopropanoate + L-alanine = beta-alanine + pyruvate. The enzyme catalyses 2-oxobutanoate + L-alanine = (2S)-2-aminobutanoate + pyruvate. It catalyses the reaction N(omega),N(omega)-dimethyl-L-arginine + pyruvate = 5-(3,3-dimethylguanidino)-2-oxopentanoate + L-alanine. The catalysed reaction is N(omega),N('omega)-dimethyl-L-arginine + pyruvate = 5-(3,3'-dimethylguanidino)-2-oxopentanoate + L-alanine. It carries out the reaction N(omega),N(omega)-dimethyl-L-arginine + glyoxylate = 5-(3,3-dimethylguanidino)-2-oxopentanoate + glycine. The enzyme catalyses N(omega),N('omega)-dimethyl-L-arginine + glyoxylate = 5-(3,3'-dimethylguanidino)-2-oxopentanoate + glycine. It catalyses the reaction N(omega)-methyl-L-arginine + pyruvate = 5-(3-methylguanidino)-2-oxopentanoate + L-alanine. The catalysed reaction is N(omega)-methyl-L-arginine + glyoxylate = 5-(3-methylguanidino)-2-oxopentanoate + glycine. It carries out the reaction L-ornithine + pyruvate = 5-amino-2-oxopentanoate + L-alanine. The enzyme catalyses L-ornithine + glyoxylate = 5-amino-2-oxopentanoate + glycine. It catalyses the reaction (2S)-2-aminobutanoate + glyoxylate = 2-oxobutanoate + glycine. The catalysed reaction is N(omega),N(omega)-dimethyl-L-arginine + oxaloacetate = 5-(3,3-dimethylguanidino)-2-oxopentanoate + L-aspartate. It carries out the reaction oxaloacetate + L-alanine = L-aspartate + pyruvate. The enzyme catalyses N(omega),N(omega)-dimethyl-L-arginine + 2-oxobutanoate = 5-(3,3-dimethylguanidino)-2-oxopentanoate + (2S)-2-aminobutanoate. It catalyses the reaction 2-oxopentanoate + N(omega),N(omega)-dimethyl-L-arginine = 5-(3,3-dimethylguanidino)-2-oxopentanoate + L-2-aminopentanoate. The catalysed reaction is 2-oxohexanoate + N(omega),N(omega)-dimethyl-L-arginine = L-2-aminohexanoate + 5-(3,3-dimethylguanidino)-2-oxopentanoate. In terms of biological role, multifunctional aminotransferase with a broad substrate specificity. Catalyzes the conversion of glyoxylate to glycine using alanine as the amino donor. Catalyzes metabolism of not L- but the D-isomer of D-beta-aminoisobutyric acid to generate 2-methyl-3-oxopropanoate and alanine. Catalyzes the transfer of the amino group from beta-alanine to pyruvate to yield L-alanine and 3-oxopropanoate. Can metabolize NG-monomethyl-L-arginine (NMMA), asymmetric NG,NG-dimethyl-L-arginine (ADMA) and symmetric NG,N'G-dimethyl-L-arginine (SDMA). ADMA is a potent inhibitor of nitric-oxide (NO) synthase, and this activity provides mechanism through which the kidney regulates blood pressure. The chain is Alanine--glyoxylate aminotransferase 2, mitochondrial (AGXT2) from Pongo abelii (Sumatran orangutan).